The following is a 522-amino-acid chain: Transactivator/viroplasmin protein (522 aa).

The span at 487-500 shows a compositional bias: basic and acidic residues; it reads KDASTDRGTTDKDG. A disordered region spans residues 487–522; it reads KDASTDRGTTDKDGPPPTRSIVEKEDVPTTSSKQVD.

This sequence belongs to the caulimoviridae viroplasmin family.

The protein localises to the host cytoplasm. Its function is as follows. Enhances the ribosomal termination-reinitiation event leading to the translation of major open reading frames on the polycistronic viral RNAs. The polypeptide is Transactivator/viroplasmin protein (Arabidopsis thaliana (Mouse-ear cress)).